We begin with the raw amino-acid sequence, 486 residues long: Receptor-interacting serine/threonine-protein kinase 3 (486 aa).

Phosphoserine is present on Ser2. Residues 22–292 (LKKLEFVGKG…DCEPKTNEVY (271 aa)) enclose the Protein kinase domain. ATP is bound by residues 28–36 (VGKGGFGVV) and Lys51. The active-site Proton acceptor is Asp143. Ser165 is subject to Phosphoserine. Thr187 is modified (phosphothreonine). At Ser204 the chain carries Phosphoserine; by autocatalysis. A Phosphothreonine; by autocatalysis modification is found at Thr231. Ser232 carries the phosphoserine; by autocatalysis modification. Residue Thr257 is modified to Phosphothreonine. Residues Ser304 and Ser326 each carry the phosphoserine modification. The interval 312-333 (QHRSSGRNLSAREPSQRGTEMD) is disordered. Position 338 is a phosphothreonine (Thr338). The interval 349–388 (LEEPSGPVPGKCPERQAQDTSVGPATPARTSSDPVAGTPQ) is disordered. Phosphoserine is present on residues Ser353, Ser369, and Ser380. Residues 366-381 (QDTSVGPATPARTSSD) are compositionally biased toward polar residues. Phosphothreonine is present on Thr392. The short motif at 440-461 (LVFNNCSEVQIGNYNSLVAPPR) is the RIP homotypic interaction motif (RHIM) element. The tract at residues 462-486 (TTASSSAKYDQAQFGRGRGWQPFHK) is disordered. Arg477 bears the Omega-N-methylarginine mark.

Belongs to the protein kinase superfamily. TKL Ser/Thr protein kinase family. Interacts (via RIP homotypic interaction motif) with RIPK1 (via RIP homotypic interaction motif); this interaction induces RIPK1 phosphorylation and formation of a RIPK1-RIPK3 necrosis-inducing complex. Interacts with MLKL; the interaction is direct and triggers necroptosis. Interacts with ZBP1 (via RIP homotypic interaction motif); interaction with ZBP1 activates RIPK3, triggering necroptosis. Upon TNF-induced necrosis, the RIPK1-RIPK3 dimer further interacts with PGAM5 and MLKL; the formation of this complex leads to PGAM5 phosphorylation and increase in PGAM5 phosphatase activity. Binds TRAF2 and is recruited to the TNFR-1 signaling complex. Interacts with PYGL, GLUL and GLUD1; these interactions result in activation of these metabolic enzymes. Interacts with BIRC2/c-IAP1, BIRC3/c-IAP2 and XIAP/BIRC4. Interacts with ARHGEF2. Interacts with PELI1 (via atypical FHA domain); the phosphorylated form at Thr-187 binds preferentially to PELI1. Interacts with BUB1B, TRAF2 and STUB1. Interacts with CASP6. Component of the AIM2 PANoptosome complex, a multiprotein complex that drives inflammatory cell death (PANoptosis). As to quaternary structure, (Microbial infection) Interacts (via RIP homotypic interaction motif) with murid herpesvirus protein RIR1; this interaction disrupts RIP3-RIP1 interactions characteristic of TNF-alpha induced necroptosis, thereby suppressing this death pathway. In terms of processing, RIPK1 and RIPK3 undergo reciprocal auto- and trans-phosphorylation. Autophosphorylated following interaction with ZBP1. Phosphorylation of Ser-204 plays a role in the necroptotic function of RIPK3. Autophosphorylates at Thr-231 and Ser-232 following activation by ZBP1: phosphorylation at these sites is a hallmark of necroptosis and is required for binding MLKL. Phosphorylation at Thr-187 is important for its kinase activity, interaction with PELI1 and for its ability to mediate TNF-induced necroptosis. Post-translationally, polyubiquitinated with 'Lys-48' and 'Lys-63'-linked chains by BIRC2/c-IAP1 and BIRC3/c-IAP2, leading to activation of NF-kappa-B. Ubiquitinated by STUB1 leading to its subsequent proteasome-dependent degradation. As to expression, expressed in embryo and in adult spleen, liver, testis, heart, brain and lung.

The protein resides in the cytoplasm. It localises to the cytosol. The protein localises to the nucleus. It catalyses the reaction L-seryl-[protein] + ATP = O-phospho-L-seryl-[protein] + ADP + H(+). The enzyme catalyses L-threonyl-[protein] + ATP = O-phospho-L-threonyl-[protein] + ADP + H(+). Activity is stimulated by ZBP1, which senses double-stranded Z-RNA structures. RIPK3-dependent necroptosis is inhibited by RIPK1: RIPK1 prevents the ZBP1-induced activation of RIPK3 via FADD-mediated recruitment of CASP8, which cleaves RIPK1 and limits TNF-induced necroptosis. Inhibited by type II inhibitor 1-(4-fluorophenyl)-N-[3-fluoro-4-(1H-pyrrolo[2,3-b]pyridin-4-yloxy)phenyl]-2-oxo-1,2-dihydropyridine-3-carboxamide. Serine/threonine-protein kinase that activates necroptosis and apoptosis, two parallel forms of cell death. Necroptosis, a programmed cell death process in response to death-inducing TNF-alpha family members, is triggered by RIPK3 following activation by ZBP1. Activated RIPK3 forms a necrosis-inducing complex and mediates phosphorylation of MLKL, promoting MLKL localization to the plasma membrane and execution of programmed necrosis characterized by calcium influx and plasma membrane damage. In addition to TNF-induced necroptosis, necroptosis can also take place in the nucleus in response to orthomyxoviruses infection: following ZBP1 activation, which senses double-stranded Z-RNA structures, nuclear RIPK3 catalyzes phosphorylation and activation of MLKL, promoting disruption of the nuclear envelope and leakage of cellular DNA into the cytosol. Also regulates apoptosis: apoptosis depends on RIPK1, FADD and CASP8, and is independent of MLKL and RIPK3 kinase activity. Phosphorylates RIPK1: RIPK1 and RIPK3 undergo reciprocal auto- and trans-phosphorylation. In some cell types, also able to restrict viral replication by promoting cell death-independent responses. In response to flavivirus infection in neurons, promotes a cell death-independent pathway that restricts viral replication: together with ZBP1, promotes a death-independent transcriptional program that modifies the cellular metabolism via up-regulation expression of the enzyme ACOD1/IRG1 and production of the metabolite itaconate. Itaconate inhibits the activity of succinate dehydrogenase, generating a metabolic state in neurons that suppresses replication of viral genomes. RIPK3 binds to and enhances the activity of three metabolic enzymes: GLUL, GLUD1, and PYGL. These metabolic enzymes may eventually stimulate the tricarboxylic acid cycle and oxidative phosphorylation, which could result in enhanced ROS production. This chain is Receptor-interacting serine/threonine-protein kinase 3, found in Mus musculus (Mouse).